The chain runs to 333 residues: Ketol-acid reductoisomerase (NADP(+)) (333 aa).

Residues 1–179 (MFYDDDADLT…GGTRAGVIKT (179 aa)) form the KARI N-terminal Rossmann domain. NADP(+)-binding positions include 22–25 (YGSQ), lysine 45, serine 48, serine 50, and 80–83 (DTAQ). The active site involves histidine 105. Glycine 131 provides a ligand contact to NADP(+). The 146-residue stretch at 180-325 (TFKDETETDL…KRLRDLMSWV (146 aa)) folds into the KARI C-terminal knotted domain. Mg(2+)-binding residues include aspartate 188, glutamate 192, glutamate 224, and glutamate 228. Serine 249 contacts substrate.

It belongs to the ketol-acid reductoisomerase family. It depends on Mg(2+) as a cofactor.

It carries out the reaction (2R)-2,3-dihydroxy-3-methylbutanoate + NADP(+) = (2S)-2-acetolactate + NADPH + H(+). The catalysed reaction is (2R,3R)-2,3-dihydroxy-3-methylpentanoate + NADP(+) = (S)-2-ethyl-2-hydroxy-3-oxobutanoate + NADPH + H(+). The protein operates within amino-acid biosynthesis; L-isoleucine biosynthesis; L-isoleucine from 2-oxobutanoate: step 2/4. It participates in amino-acid biosynthesis; L-valine biosynthesis; L-valine from pyruvate: step 2/4. Functionally, involved in the biosynthesis of branched-chain amino acids (BCAA). Catalyzes an alkyl-migration followed by a ketol-acid reduction of (S)-2-acetolactate (S2AL) to yield (R)-2,3-dihydroxy-isovalerate. In the isomerase reaction, S2AL is rearranged via a Mg-dependent methyl migration to produce 3-hydroxy-3-methyl-2-ketobutyrate (HMKB). In the reductase reaction, this 2-ketoacid undergoes a metal-dependent reduction by NADPH to yield (R)-2,3-dihydroxy-isovalerate. The chain is Ketol-acid reductoisomerase (NADP(+)) from Mycobacterium avium.